Here is a 428-residue protein sequence, read N- to C-terminus: 3-phosphoshikimate 1-carboxyvinyltransferase (428 aa).

Lys22, Ser23, and Arg27 together coordinate 3-phosphoshikimate. Phosphoenolpyruvate is bound at residue Lys22. Residues Gly96 and Arg124 each coordinate phosphoenolpyruvate. Residues Ser169, Ser170, Gln171, Ser197, Asp313, Asn336, and Lys340 each contribute to the 3-phosphoshikimate site. Residue Gln171 participates in phosphoenolpyruvate binding. The active-site Proton acceptor is the Asp313. 3 residues coordinate phosphoenolpyruvate: Arg344, Arg386, and Lys411.

Belongs to the EPSP synthase family. As to quaternary structure, monomer.

It localises to the cytoplasm. The catalysed reaction is 3-phosphoshikimate + phosphoenolpyruvate = 5-O-(1-carboxyvinyl)-3-phosphoshikimate + phosphate. Its pathway is metabolic intermediate biosynthesis; chorismate biosynthesis; chorismate from D-erythrose 4-phosphate and phosphoenolpyruvate: step 6/7. Its function is as follows. Catalyzes the transfer of the enolpyruvyl moiety of phosphoenolpyruvate (PEP) to the 5-hydroxyl of shikimate-3-phosphate (S3P) to produce enolpyruvyl shikimate-3-phosphate and inorganic phosphate. The protein is 3-phosphoshikimate 1-carboxyvinyltransferase of Photorhabdus laumondii subsp. laumondii (strain DSM 15139 / CIP 105565 / TT01) (Photorhabdus luminescens subsp. laumondii).